The chain runs to 271 residues: PA-phosphatase related-family protein DDB_G0284367 (271 aa).

A run of 6 helical transmembrane segments spans residues 23–43 (FLCLGIFVIESVLFNFVIPPF), 68–88 (IVPVWLLMLIALGLPMVVFIG), 102–122 (AALGLFQAFTITMLFTDILKV), 150–170 (FPSGHSSVSFCGMTFLSFYLC), 181–201 (GNILKALVCLCPFMISALVAV), and 211–231 (FSDILAGSVIGLSIGVFVYFM).

The protein belongs to the PA-phosphatase related phosphoesterase family.

Its subcellular location is the membrane. The polypeptide is PA-phosphatase related-family protein DDB_G0284367 (Dictyostelium discoideum (Social amoeba)).